A 437-amino-acid polypeptide reads, in one-letter code: Cytochrome b (437 aa).

Residues 45–65 traverse the membrane as a helical segment; it reads WIWGIVLAFTLVLQIVTGIVL. 2 residues coordinate heme b: H97 and H111. A run of 9 helical transmembrane segments spans residues 100–120, 129–149, 156–176, 194–214, 248–268, 298–318, 330–350, 365–385, and 391–411; these read GASL…YYGS, WIVG…GYVL, FWGA…GPSI, FFSL…IHIW, FVIK…AVVA, FLPF…VILV, FFGV…PWLD, MWFW…AMPT, and WISL…LPLL. Residues H198 and H212 each contribute to the heme b site.

This sequence belongs to the cytochrome b family. As to quaternary structure, the main subunits of complex b-c1 are: cytochrome b, cytochrome c1 and the Rieske protein. Heme b serves as cofactor.

Its subcellular location is the cell membrane. Component of the ubiquinol-cytochrome c reductase complex (complex III or cytochrome b-c1 complex), which is a respiratory chain that generates an electrochemical potential coupled to ATP synthesis. This is Cytochrome b (petB) from Rhodobacter capsulatus (Rhodopseudomonas capsulata).